We begin with the raw amino-acid sequence, 599 residues long: MSLLKIYWRAMQYLAVERTATITMCVASVLVALVTLAEPVLFGRVIQSISDKGDIFSPLLMWAALGGFNIMAAVFVARGADRLAHRRRLGVMIDSYERLITMPLAWHQKRGTSNALHTLIRATDSLFTLWLEFMRQHLTTVVALATLIPVAMTMDMRMSLVLIVLGVIYVMIGQLVMRKTKDGQAAVEKHHHKLFEHVSDTISNVSVVQSYNRIASETQALRDYAKNLENAQFPVLNWWALASGLNRMASTFSMVVVLVLGAYFVTKGQMRVGDVIAFIGFAQLMIGRLDQISAFINQTVTARAKLEEFFQMEDATADRQEPENVADLNDVKGDIVFDNVTYEFPNSGQGVYDVSFEVKPGQTVAIVGPTGAGKTTLINLLQRVFDPAAGRIMIDGTDTRTVSRRSLRHAIATVFQDAGLFNRSVEDNIRVGRANATHEEVHAAAKAAAAHDFILAKSEGYDTFVGERGSQLSGGERQRLAIARAILKDSPILVLDEATSALDVETEEKVTQAVDELSHNRTTFIIAHRLSTVRSADLVLFMDKGHLVESGSFNELAERGGRFSDLLRAGGLKLEDKQPKQPVVEGSNVMPFPVKGAVA.

Residues 21–301 enclose the ABC transmembrane type-1 domain; that stretch reads TITMCVASVL…ISAFINQTVT (281 aa). Helical transmembrane passes span 22-42, 55-75, 156-176, 248-268, and 276-296; these read ITMC…PVLF, IFSP…AAVF, MRMS…GQLV, MAST…VTKG, and IAFI…SAFI. The ABC transporter domain occupies 335–569; sequence IVFDNVTYEF…GGRFSDLLRA (235 aa). Position 368–375 (368–375) interacts with ATP; it reads GPTGAGKT.

The protein belongs to the ABC transporter superfamily. Beta-(1--&gt;2)glucan exporter (TC 3.A.1.108.1) family. Homodimer.

Its subcellular location is the cell inner membrane. The enzyme catalyses [(1-&gt;2)-beta-D-glucosyl](n)(in) + ATP + H2O = [(1-&gt;2)-beta-D-glucosyl](n)(out) + ADP + phosphate + H(+). Functionally, involved in beta-(1--&gt;2)glucan export. Its export to the periplasmic space is required to exert its action as a virulence factor. Transmembrane domains (TMD) form a pore in the inner membrane and the ATP-binding domain (NBD) is responsible for energy generation. In Brucella abortus (strain 2308), this protein is Beta-(1--&gt;2)glucan export ATP-binding/permease protein NdvA.